Consider the following 1065-residue polypeptide: MHQDAMQGSIYEGSRRNTISKPSNNNPPLDMSSLNNDFGQQLDSLATGVGSGSLNGTTNPSSNFNDSNRSNISSSLRSEMEMSNNLLKNTQNDTWTSTVGLSVPENQEAMNFNEGPTGISSIASKNNSSITSKLQNNSNLSVTSSANRGRTSSVSSSYDPSFPWGPRMSSVSSGKQHLSSLSLHTHFNPSSSSTVSSDSLESSQQKAPSSSSTATPASAASEIISNKDPVVEPTHSASNAANSGSNTIRARQTTRTRSNTLPWSPRVFGPTLGYNTPPFGYPPTTSSALPNASGSSSSFFGLPTAVSASAGTSFSDISPAAPKASLENNIASNASSLLNPVGLDHFSAASGWSRDFNHLPASSLATARSSLTGNAKSGIDSSVTGMPSDNYARVVESSTAEFFDPSLASSFGLTNYRTKPLTTGFNHPRPQGHGLNTSLFNTSSGGSLKSPTFEVSNRLGDVDTVPDLPPLGSLSSRPKPSSSSRRRSQSLSAMLKTSNPYMPSPSLLSGSLANSSEHSSSPRLRGSPIHNQPVSSSKSTASLNTNNNGLRASTPEMANISTRSSSESNNTNSWPTVGDATIENLTQHEPTHALWVGNLPSGVSATTVATTFSAYGTVSSIRMLSHKHSAFLNFDSVETAKHVLEELNGKRIFFGSDPVCISFAKVASSSSESSHSAVDGLNKAFSNVSFVPSLREVYDDLINVVQSFGFKDLSKIYQILNAACELTDFAAQIPSISKAFSSRRLNAPKLRQVRKRIDNGLCTQEEVEDIAINWLDEVSDLSSDHLGNTVVQKLFDYCSDPVKEMMLERIAPHLAQIGIHKNGTWAAQKIVDVASTEAQMRLIAKHLQPYIPLLFADQFGNYVVQTCLKFGAPMNDFVFEAILNQFWVIAQSRYGSRAVRACLESPDVTEEQRVLVAAAITVYSVHLAMNGNGTLLLTYLVENMNYPHIPILLTRRFVQDIVRVCTHRLAYNSLLKIISISQGDTACGDLVVDAILDTQNDLNPNSLEKILFEQTYGPSFICKLLTHENISASHRQQLQSAVRNVLGTMEDRGSSELKKLAEVCA.

Disordered regions lie at residues 1–78 (MHQD…SLRS), 130–265 (ITSK…PWSP), and 422–573 (TTGF…NTNS). The span at 16–44 (RNTISKPSNNNPPLDMSSLNNDFGQQLDS) shows a compositional bias: polar residues. Residues 59-77 (NPSSNFNDSNRSNISSSLR) show a composition bias toward low complexity. Composition is skewed to polar residues over residues 134–151 (LQNN…RGRT) and 169–189 (SSVS…HFNP). Composition is skewed to low complexity over residues 190 to 224 (SSSS…SEII) and 236 to 246 (SASNAANSGSN). Polar residues-rich tracts occupy residues 247 to 262 (TIRA…NTLP) and 434 to 455 (GLNT…TFEV). Position 260 is a phosphothreonine (Thr-260). A compositionally biased stretch (low complexity) spans 470–483 (PLGSLSSRPKPSSS). Polar residues-rich tracts occupy residues 495–522 (LKTS…SSSP) and 529–551 (IHNQ…NGLR). A phosphoserine mark is found at Ser-506, Ser-511, and Ser-515. Residue Thr-554 is modified to Phosphothreonine. Low complexity predominate over residues 559–573 (NISTRSSSESNNTNS). Residues 592–666 (HALWVGNLPS…DPVCISFAKV (75 aa)) enclose the RRM domain. Residues 712-1065 (DLSKIYQILN…ELKKLAEVCA (354 aa)) enclose the PUM-HD domain. Pumilio repeat units follow at residues 771 to 808 (AINW…MMLE), 809 to 844 (RIAP…RLIA), 846 to 884 (HLQP…AILN), 886 to 917 (FWVI…VLVA), 919 to 954 (AITV…ILLT), and 956 to 993 (RFVQ…LVVD).

The protein resides in the cytoplasm. The sequence is that of Pumilio domain-containing protein P35G2.14 from Schizosaccharomyces pombe (strain 972 / ATCC 24843) (Fission yeast).